The primary structure comprises 510 residues: tRNA(Ile)-lysidine synthase (510 aa).

S32–S37 provides a ligand contact to ATP.

The protein belongs to the tRNA(Ile)-lysidine synthase family.

It localises to the cytoplasm. It catalyses the reaction cytidine(34) in tRNA(Ile2) + L-lysine + ATP = lysidine(34) in tRNA(Ile2) + AMP + diphosphate + H(+). Functionally, ligates lysine onto the cytidine present at position 34 of the AUA codon-specific tRNA(Ile) that contains the anticodon CAU, in an ATP-dependent manner. Cytidine is converted to lysidine, thus changing the amino acid specificity of the tRNA from methionine to isoleucine. The protein is tRNA(Ile)-lysidine synthase of Blochmanniella pennsylvanica (strain BPEN).